A 229-amino-acid polypeptide reads, in one-letter code: Peroxiredoxin 1 (229 aa).

Residues 33–192 enclose the Thioredoxin domain; the sequence is LGPKNKAPDF…AFRTLKAFQF (160 aa). Cys78 functions as the Cysteine sulfenic acid (-SOH) intermediate in the catalytic mechanism.

This sequence belongs to the peroxiredoxin family. AhpC/Prx1 subfamily. In terms of assembly, homodimer; disulfide-linked, upon oxidation.

The enzyme catalyses a hydroperoxide + [thioredoxin]-dithiol = an alcohol + [thioredoxin]-disulfide + H2O. In terms of biological role, thiol-specific peroxidase that catalyzes the reduction of hydrogen peroxide and organic hydroperoxides to water and alcohols, respectively. Plays a role in cell protection against oxidative stress by detoxifying peroxides and as sensor of hydrogen peroxide-mediated signaling events. The protein is Peroxiredoxin 1 (TSA1) of Brugia malayi (Filarial nematode worm).